Here is an 80-residue protein sequence, read N- to C-terminus: Small ribosomal subunit protein bS16 (80 aa).

It belongs to the bacterial ribosomal protein bS16 family.

The protein is Small ribosomal subunit protein bS16 of Blochmanniella pennsylvanica (strain BPEN).